The chain runs to 487 residues: Protein nucleotidyltransferase YdiU (487 aa).

8 residues coordinate ATP: Gly-90, Gly-92, Arg-93, Lys-113, Asp-125, Gly-126, Arg-176, and Arg-183. Asp-252 (proton acceptor) is an active-site residue. Residues Asn-253 and Asp-262 each coordinate Mg(2+). Asp-262 contributes to the ATP binding site.

This sequence belongs to the SELO family. Mg(2+) is required as a cofactor. Requires Mn(2+) as cofactor.

The catalysed reaction is L-seryl-[protein] + ATP = 3-O-(5'-adenylyl)-L-seryl-[protein] + diphosphate. It carries out the reaction L-threonyl-[protein] + ATP = 3-O-(5'-adenylyl)-L-threonyl-[protein] + diphosphate. It catalyses the reaction L-tyrosyl-[protein] + ATP = O-(5'-adenylyl)-L-tyrosyl-[protein] + diphosphate. The enzyme catalyses L-histidyl-[protein] + UTP = N(tele)-(5'-uridylyl)-L-histidyl-[protein] + diphosphate. The catalysed reaction is L-seryl-[protein] + UTP = O-(5'-uridylyl)-L-seryl-[protein] + diphosphate. It carries out the reaction L-tyrosyl-[protein] + UTP = O-(5'-uridylyl)-L-tyrosyl-[protein] + diphosphate. In terms of biological role, nucleotidyltransferase involved in the post-translational modification of proteins. It can catalyze the addition of adenosine monophosphate (AMP) or uridine monophosphate (UMP) to a protein, resulting in modifications known as AMPylation and UMPylation. This is Protein nucleotidyltransferase YdiU from Pseudomonas fluorescens (strain ATCC BAA-477 / NRRL B-23932 / Pf-5).